A 263-amino-acid chain; its full sequence is Small ribosomal subunit protein uS2 (263 aa).

Ser2 carries the N-acetylserine modification. The span at 211-242 shows a compositional bias: acidic residues; it reads EQTAEEEAEAAEGAEFEVEEEEVEQEWQEPAE. The tract at residues 211–263 is disordered; sequence EQTAEEEAEAAEGAEFEVEEEEVEQEWQEPAEADWNASAPPADWNDAANAEAF. Residues 246 to 263 are compositionally biased toward low complexity; it reads NASAPPADWNDAANAEAF.

Belongs to the universal ribosomal protein uS2 family. As to quaternary structure, component of the small ribosomal subunit. Mature ribosomes consist of a small (40S) and a large (60S) subunit. The 40S subunit contains about 33 different proteins and 1 molecule of RNA (18S). The 60S subunit contains about 49 different proteins and 3 molecules of RNA (25S, 5.8S and 5S). Interacts with RPS21.

The protein resides in the cytoplasm. Its function is as follows. Required for the assembly and/or stability of the 40S ribosomal subunit. Required for the processing of the 20S rRNA-precursor to mature 18S rRNA in a late step of the maturation of 40S ribosomal subunits. The sequence is that of Small ribosomal subunit protein uS2 from Komagataella phaffii (strain GS115 / ATCC 20864) (Yeast).